Consider the following 535-residue polypeptide: CTP synthase (535 aa).

Residues 1–267 (MTKYIFVTGG…DQIVCDHLKL (267 aa)) are amidoligase domain. Position 13 (Ser-13) interacts with CTP. Position 13 (Ser-13) interacts with UTP. 14–19 (SLGKGI) serves as a coordination point for ATP. Tyr-54 contacts L-glutamine. Residue Asp-71 coordinates ATP. Residues Asp-71 and Glu-141 each contribute to the Mg(2+) site. CTP-binding positions include 148–150 (DIE), 188–193 (KTKPTQ), and Lys-224. UTP is bound by residues 188–193 (KTKPTQ) and Lys-224. 240-242 (RDA) serves as a coordination point for ATP. The Glutamine amidotransferase type-1 domain maps to 292-534 (KIALVGKYVE…VKASITNKES (243 aa)). Gly-354 contributes to the L-glutamine binding site. The active-site Nucleophile; for glutamine hydrolysis is the Cys-381. L-glutamine-binding positions include 382–385 (LGMQ), Glu-405, and Arg-462. Residues His-507 and Glu-509 contribute to the active site.

The protein belongs to the CTP synthase family. Homotetramer.

It carries out the reaction UTP + L-glutamine + ATP + H2O = CTP + L-glutamate + ADP + phosphate + 2 H(+). It catalyses the reaction L-glutamine + H2O = L-glutamate + NH4(+). The enzyme catalyses UTP + NH4(+) + ATP = CTP + ADP + phosphate + 2 H(+). It functions in the pathway pyrimidine metabolism; CTP biosynthesis via de novo pathway; CTP from UDP: step 2/2. Allosterically activated by GTP, when glutamine is the substrate; GTP has no effect on the reaction when ammonia is the substrate. The allosteric effector GTP functions by stabilizing the protein conformation that binds the tetrahedral intermediate(s) formed during glutamine hydrolysis. Inhibited by the product CTP, via allosteric rather than competitive inhibition. Its function is as follows. Catalyzes the ATP-dependent amination of UTP to CTP with either L-glutamine or ammonia as the source of nitrogen. Regulates intracellular CTP levels through interactions with the four ribonucleotide triphosphates. This is CTP synthase from Bacillus thuringiensis subsp. konkukian (strain 97-27).